The primary structure comprises 520 residues: GMP synthase [glutamine-hydrolyzing] (520 aa).

Positions 13–205 constitute a Glutamine amidotransferase type-1 domain; the sequence is KIIVLDYGSQ…ALNICKAKGD (193 aa). C90 acts as the Nucleophile in catalysis. Catalysis depends on residues H179 and E181. In terms of domain architecture, GMPS ATP-PPase spans 206 to 395; it reads WSMDNFIDMQ…LGMPDHIVWR (190 aa). 233–239 is an ATP binding site; sequence SGGVDSS.

In terms of assembly, homodimer.

The catalysed reaction is XMP + L-glutamine + ATP + H2O = GMP + L-glutamate + AMP + diphosphate + 2 H(+). Its pathway is purine metabolism; GMP biosynthesis; GMP from XMP (L-Gln route): step 1/1. Functionally, catalyzes the synthesis of GMP from XMP. The polypeptide is GMP synthase [glutamine-hydrolyzing] (Streptococcus pneumoniae (strain ATCC 700669 / Spain 23F-1)).